Here is a 304-residue protein sequence, read N- to C-terminus: UDP-N-acetylenolpyruvoylglucosamine reductase (304 aa).

In terms of domain architecture, FAD-binding PCMH-type spans methionine 33–lysine 212. Residue arginine 176 is part of the active site. Serine 226 acts as the Proton donor in catalysis. The active site involves glutamate 296.

This sequence belongs to the MurB family. The cofactor is FAD.

The protein resides in the cytoplasm. The catalysed reaction is UDP-N-acetyl-alpha-D-muramate + NADP(+) = UDP-N-acetyl-3-O-(1-carboxyvinyl)-alpha-D-glucosamine + NADPH + H(+). It functions in the pathway cell wall biogenesis; peptidoglycan biosynthesis. Its function is as follows. Cell wall formation. The chain is UDP-N-acetylenolpyruvoylglucosamine reductase from Exiguobacterium sibiricum (strain DSM 17290 / CCUG 55495 / CIP 109462 / JCM 13490 / 255-15).